We begin with the raw amino-acid sequence, 254 residues long: Ribonuclease HII (254 aa).

One can recognise an RNase H type-2 domain in the interval Gln70–Gly254. Asp76, Glu77, and Asp168 together coordinate a divalent metal cation.

Belongs to the RNase HII family. Mn(2+) is required as a cofactor. It depends on Mg(2+) as a cofactor.

It localises to the cytoplasm. It carries out the reaction Endonucleolytic cleavage to 5'-phosphomonoester.. In terms of biological role, endonuclease that specifically degrades the RNA of RNA-DNA hybrids. In Streptococcus gordonii (strain Challis / ATCC 35105 / BCRC 15272 / CH1 / DL1 / V288), this protein is Ribonuclease HII.